We begin with the raw amino-acid sequence, 190 residues long: Elongation factor P-like protein (190 aa).

This sequence belongs to the elongation factor P family.

This Psychromonas ingrahamii (strain DSM 17664 / CCUG 51855 / 37) protein is Elongation factor P-like protein.